Here is a 500-residue protein sequence, read N- to C-terminus: Cytochrome P450 71B34 (500 aa).

Residues 1 to 21 form a helical membrane-spanning segment; it reads MTNIWLLSLIFVICILVAVFN. Cysteine 440 contributes to the heme binding site.

This sequence belongs to the cytochrome P450 family. Requires heme as cofactor.

Its subcellular location is the membrane. The chain is Cytochrome P450 71B34 (CYP71B34) from Arabidopsis thaliana (Mouse-ear cress).